The chain runs to 92 residues: Phenol 2-monooxygenase, auxiliary component DmpK (92 aa).

Homotrimer or homotetramer. Interacts with the phenol hydroxylase components DmpL (P1 component) and DmpN (P3 component).

It participates in aromatic compound metabolism; phenol degradation. In terms of biological role, dmpK is an auxiliary protein associated with the multicomponent phenol hydroxylase DmpLMNOP and it may be involved in the post-translational incorporation of iron into the oxygenase component of the phenol hydroxylase. Required for growth on phenol but not for in vitro phenol hydroxylase activity. The sequence is that of Phenol 2-monooxygenase, auxiliary component DmpK from Pseudomonas sp. (strain CF600).